We begin with the raw amino-acid sequence, 82 residues long: MTIKHPLVTEKAMNDMDFENKLQFVCHPEATKGDIAAAVESQFDVEVDSINTQVRMDGDKKAIVELSADDDAQEVASRIGVF.

Belongs to the universal ribosomal protein uL23 family. Part of the 50S ribosomal subunit. Contacts protein L29.

Functionally, binds to 23S rRNA. One of the proteins that surrounds the polypeptide exit tunnel on the outside of the ribosome. This Natronomonas pharaonis (strain ATCC 35678 / DSM 2160 / CIP 103997 / JCM 8858 / NBRC 14720 / NCIMB 2260 / Gabara) (Halobacterium pharaonis) protein is Large ribosomal subunit protein uL23.